We begin with the raw amino-acid sequence, 304 residues long: Homoserine kinase (304 aa).

ATP is bound at residue 92–102 (PLARGLGSSAT).

Belongs to the GHMP kinase family. Homoserine kinase subfamily.

It localises to the cytoplasm. The catalysed reaction is L-homoserine + ATP = O-phospho-L-homoserine + ADP + H(+). The protein operates within amino-acid biosynthesis; L-threonine biosynthesis; L-threonine from L-aspartate: step 4/5. In terms of biological role, catalyzes the ATP-dependent phosphorylation of L-homoserine to L-homoserine phosphate. The protein is Homoserine kinase of Nostoc punctiforme (strain ATCC 29133 / PCC 73102).